A 367-amino-acid chain; its full sequence is MYVKNINLLNYRNYKKLSVELTENVNVFVGDNAQGKTNILESVYYCAFAKSHRTSKDKELINWENSTAYISLLIGKNRLDKKIDINILRDGKKAIKVNNIKVNKIGELFGIFNVVMFSPEDLKVIKEAPSLRRRLLDMELSQVNPNYYFNLVQYNKVLGERNILLKSRSFSEDILDVYDIQLSKYADYIISKRLEYINKINFYGDIIHREITSGKEEINFKYNCTVNLENGKFKDNYLKKLKDNIQKDREKGLTSVGPHRDDFSVFINNIDTKIFGSQGQQRTSILTMKFASLKIIREITGEYPVLLLDDVLSELDLNRKKYILRSIKDIQTIITCAGIEDLNDYLDDKVKIFNVSNGQILNQGRNI.

ATP is bound at residue 30–37 (GDNAQGKT).

The protein belongs to the RecF family.

It localises to the cytoplasm. In terms of biological role, the RecF protein is involved in DNA metabolism; it is required for DNA replication and normal SOS inducibility. RecF binds preferentially to single-stranded, linear DNA. It also seems to bind ATP. The chain is DNA replication and repair protein RecF from Clostridium beijerinckii (strain ATCC 51743 / NCIMB 8052) (Clostridium acetobutylicum).